A 2195-amino-acid polypeptide reads, in one-letter code: Integrator complex subunit 1 (2195 aa).

The tract at residues 1 to 86 (MNRAKPTTVR…RPKLSSTPPL (86 aa)) is disordered. Residue S13 is modified to Phosphoserine. The span at 34–45 (GQASESKTTSTL) shows a compositional bias: polar residues. K47 is subject to N6-acetyllysine. Over residues 62–75 (SASLSGTSALTGLT) the composition is skewed to low complexity. T83 is modified (phosphothreonine). Residue S87 is modified to Phosphoserine. The disordered stretch occupies residues 267-297 (LLQGEGARSGGELGAGSSPHPSLTEEEDSQT). Phosphoserine occurs at positions 307 and 926. Positions 923-947 (STASGEEDDEGESREQKAKKRQRQQ) are disordered. A helical transmembrane segment spans residues 1165–1185 (HILVVHAMVILLTLGPPRSGD). Residues 1313–1347 (SLPPRRDSTEAPKPESSPEPPPGQGRTRAGTQVPV) are disordered. A compositionally biased stretch (basic and acidic residues) spans 1316–1325 (PRRDSTEAPK). Phosphoserine is present on residues S1320, S1328, and S1329.

Belongs to the Integrator subunit 1 family. Component of the Integrator complex, composed of core subunits INTS1, INTS2, INTS3, INTS4, INTS5, INTS6, INTS7, INTS8, INTS9/RC74, INTS10, INTS11/CPSF3L, INTS12, INTS13, INTS14 and INTS15. The core complex associates with protein phosphatase 2A subunits PPP2CA and PPP2R1A, to form the Integrator-PP2A (INTAC) complex. Interacts with ESRRB, ESRRB is not a core component of the Integrator complex and this association is a bridge for the interaction with the multiprotein complex Integrator; attracts the transcriptional machinery.

The protein localises to the nucleus. Its subcellular location is the nucleus membrane. In terms of biological role, component of the integrator complex, a multiprotein complex that terminates RNA polymerase II (Pol II) transcription in the promoter-proximal region of genes. The integrator complex provides a quality checkpoint during transcription elongation by driving premature transcription termination of transcripts that are unfavorably configured for transcriptional elongation: the complex terminates transcription by (1) catalyzing dephosphorylation of the C-terminal domain (CTD) of Pol II subunit POLR2A/RPB1 and SUPT5H/SPT5, (2) degrading the exiting nascent RNA transcript via endonuclease activity and (3) promoting the release of Pol II from bound DNA. The integrator complex is also involved in terminating the synthesis of non-coding Pol II transcripts, such as enhancer RNAs (eRNAs), small nuclear RNAs (snRNAs), telomerase RNAs and long non-coding RNAs (lncRNAs). Within the integrator complex, INTS1 is involved in the post-termination step: INTS1 displaces INTS3 and the SOSS factors, allowing the integrator complex to return to the closed conformation, ready to bind to the paused elongation complex for another termination cycle. Mediates recruitment of cytoplasmic dynein to the nuclear envelope, probably as component of the integrator complex. The sequence is that of Integrator complex subunit 1 from Mus musculus (Mouse).